A 233-amino-acid polypeptide reads, in one-letter code: Nickel import system ATP-binding protein NikE (233 aa).

Residues 2–228 enclose the ABC transporter domain; it reads IELKHVTFGY…DRHPYTKELV (227 aa). 35 to 42 contributes to the ATP binding site; the sequence is GESGCGKS.

It belongs to the ABC transporter superfamily. In terms of assembly, the complex is composed of two ATP-binding proteins (NikD and NikE), two transmembrane proteins (NikB and NikC) and a solute-binding protein (NikA).

The protein localises to the cell membrane. The enzyme catalyses Ni(2+)(out) + ATP + H2O = Ni(2+)(in) + ADP + phosphate + H(+). In terms of biological role, part of the ABC transporter complex NikABCDE (Opp2) involved in nickel import. Probably responsible for energy coupling to the transport system. The sequence is that of Nickel import system ATP-binding protein NikE from Staphylococcus aureus (strain USA300).